The sequence spans 100 residues: Large ribosomal subunit protein bL27 (100 aa).

A propeptide spanning residues Met1–Phe9 is cleaved from the precursor.

It belongs to the bacterial ribosomal protein bL27 family. In terms of processing, the N-terminus is cleaved by ribosomal processing cysteine protease Prp.

The protein is Large ribosomal subunit protein bL27 of Clostridium perfringens (strain ATCC 13124 / DSM 756 / JCM 1290 / NCIMB 6125 / NCTC 8237 / Type A).